Here is a 298-residue protein sequence, read N- to C-terminus: Putative GATA zinc finger domain-containing protein 25 (298 aa).

Residues 4-37 (DNKNKNDNYQESIQRIVNQRNNLLKEIENKINQQ) adopt a coiled-coil conformation. The interval 148-227 (QQQLQQSHTK…RGRPSKPKPE (80 aa)) is disordered. The segment covering 183-202 (EENEENEENEENEENEENEE) has biased composition (acidic residues). Residues 203-212 (NKEKDVEVAK) are compositionally biased toward basic and acidic residues. Residues 214-223 (NKPKRGRPSK) are compositionally biased toward basic residues. Residues 229–256 (CFRYGTRSCPYWRKNVIKGELVDVCNAC) form a GATA-type; degenerate zinc finger.

The protein is Putative GATA zinc finger domain-containing protein 25 (gtaY) of Dictyostelium discoideum (Social amoeba).